We begin with the raw amino-acid sequence, 283 residues long: MLRIAIQTKGRMHEKTAVLLNEVGIRLPAAKRTLLIQSNTFPAEILFLRDDDIPQAVANGVADVGIVGENEFHEKKQEAIVIKQLGFSHCRLSLAIPKEEEYPGLHWFFKKKIATSYPKILSAFLKKNAIEADIHFINGSVEISPGIGLSDAIFDIVSSGSTLISNHLKEVEIVMYSEAILISNKKLDEKKNKILQELIFRIDAVQTANDKKYILLNAPNDSLQEIFQILPGMKSPTIFPLAKKGWSSIHSVISEKQSWEIINKLKNAGAEGILIVPIEKMIL.

It belongs to the ATP phosphoribosyltransferase family. Long subfamily. Requires Mg(2+) as cofactor.

It is found in the cytoplasm. The enzyme catalyses 1-(5-phospho-beta-D-ribosyl)-ATP + diphosphate = 5-phospho-alpha-D-ribose 1-diphosphate + ATP. The protein operates within amino-acid biosynthesis; L-histidine biosynthesis; L-histidine from 5-phospho-alpha-D-ribose 1-diphosphate: step 1/9. Its activity is regulated as follows. Feedback inhibited by histidine. Catalyzes the condensation of ATP and 5-phosphoribose 1-diphosphate to form N'-(5'-phosphoribosyl)-ATP (PR-ATP). Has a crucial role in the pathway because the rate of histidine biosynthesis seems to be controlled primarily by regulation of HisG enzymatic activity. This is ATP phosphoribosyltransferase from Azobacteroides pseudotrichonymphae genomovar. CFP2.